The following is a 535-amino-acid chain: Heat shock factor protein 2 (535 aa).

Glycyl lysine isopeptide (Lys-Gly) (interchain with G-Cter in SUMO2) cross-links involve residues Lys-2, Lys-82, Lys-135, Lys-139, Lys-151, Lys-210, Lys-218, and Lys-237. Residues 7–112 mediate DNA binding; it reads VPAFLSKLWT…LLENIKRKVS (106 aa). Residues 119-192 form a hydrophobic repeat HR-A/B region; that stretch reads NKIRQEDLTK…VTLVQNNQLV (74 aa). Positions 298 to 325 are disordered; it reads QSGEQSEPAREPLRVGSAGSSSPLMSSA. Residues 313–325 show a composition bias toward low complexity; that stretch reads GSAGSSSPLMSSA. Residues 359–384 are hydrophobic repeat HR-C; it reads LLDYLDSIDCSLEDFQAMLSGRQFSI. The segment at 418 to 437 is disordered; it reads TKSSVVQHVSEEGRKSKSKP. The segment covering 426–437 has biased composition (basic and acidic residues); the sequence is VSEEGRKSKSKP.

This sequence belongs to the HSF family. As to quaternary structure, DNA-binding homotrimer in stressed or heat shocked cells, otherwise found as a homodimer. Isoform alpha is expressed predominantly in testis while isoform beta is expressed predominantly in heart and brain.

It localises to the cytoplasm. The protein resides in the nucleus. DNA-binding protein that specifically binds heat shock promoter elements (HSE) and activates transcription. In higher eukaryotes, HSF is unable to bind to the HSE unless the cells are heat shocked. HSF2 is expressed in a form that binds DNA constitutively but loses DNA binding by incubation at greater than 41 degrees C. This Mus musculus (Mouse) protein is Heat shock factor protein 2 (Hsf2).